The chain runs to 637 residues: Biosynthetic arginine decarboxylase (637 aa).

N6-(pyridoxal phosphate)lysine is present on lysine 101. Phenylalanine 286–tyrosine 296 is a substrate binding site.

The protein belongs to the Orn/Lys/Arg decarboxylase class-II family. SpeA subfamily. The cofactor is Mg(2+). Requires pyridoxal 5'-phosphate as cofactor.

It carries out the reaction L-arginine + H(+) = agmatine + CO2. It participates in amine and polyamine biosynthesis; agmatine biosynthesis; agmatine from L-arginine: step 1/1. Functionally, catalyzes the biosynthesis of agmatine from arginine. The chain is Biosynthetic arginine decarboxylase from Shewanella sp. (strain MR-7).